Here is a 267-residue protein sequence, read N- to C-terminus: Small ribosomal subunit protein uS2c (267 aa).

Residues 237–267 (KQKIKKTGVKISGNRRTSSITKKRNPASSKI) are disordered. The span at 250-267 (NRRTSSITKKRNPASSKI) shows a compositional bias: polar residues.

It belongs to the universal ribosomal protein uS2 family.

The protein resides in the plastid. It localises to the chloroplast. The polypeptide is Small ribosomal subunit protein uS2c (rps2) (Chlorella vulgaris (Green alga)).